Consider the following 337-residue polypeptide: RNA 3'-terminal phosphate cyclase (337 aa).

Residues Gln-101 and 282-285 contribute to the ATP site; that span reads HMSD. The Tele-AMP-histidine intermediate role is filled by His-306.

It belongs to the RNA 3'-terminal cyclase family. Type 1 subfamily.

The protein localises to the cytoplasm. The enzyme catalyses a 3'-end 3'-phospho-ribonucleotide-RNA + ATP = a 3'-end 2',3'-cyclophospho-ribonucleotide-RNA + AMP + diphosphate. Catalyzes the conversion of 3'-phosphate to a 2',3'-cyclic phosphodiester at the end of RNA. The mechanism of action of the enzyme occurs in 3 steps: (A) adenylation of the enzyme by ATP; (B) transfer of adenylate to an RNA-N3'P to produce RNA-N3'PP5'A; (C) and attack of the adjacent 2'-hydroxyl on the 3'-phosphorus in the diester linkage to produce the cyclic end product. The biological role of this enzyme is unknown but it is likely to function in some aspects of cellular RNA processing. In Saccharolobus islandicus (strain L.S.2.15 / Lassen #1) (Sulfolobus islandicus), this protein is RNA 3'-terminal phosphate cyclase.